Reading from the N-terminus, the 568-residue chain is CTP synthase (568 aa).

The amidoligase domain stretch occupies residues 1–276 (MPQARTIKHV…DAYLVRRLGL (276 aa)). S18 provides a ligand contact to CTP. Residue S18 participates in UTP binding. ATP-binding positions include 19–24 (SLGKGL) and D76. Residues D76 and E150 each contribute to the Mg(2+) site. CTP is bound by residues 157 to 159 (DIE), 197 to 202 (KTKPTQ), and K233. Residues 197 to 202 (KTKPTQ) and K233 contribute to the UTP site. A Glutamine amidotransferase type-1 domain is found at 301 to 550 (RIALVGKYVD…VNAALEYRAA (250 aa)). G364 lines the L-glutamine pocket. Catalysis depends on C391, which acts as the Nucleophile; for glutamine hydrolysis. Residues 392-395 (LGLQ), E415, and R476 each bind L-glutamine. Active-site residues include H523 and E525.

It belongs to the CTP synthase family. Homotetramer.

It carries out the reaction UTP + L-glutamine + ATP + H2O = CTP + L-glutamate + ADP + phosphate + 2 H(+). It catalyses the reaction L-glutamine + H2O = L-glutamate + NH4(+). The enzyme catalyses UTP + NH4(+) + ATP = CTP + ADP + phosphate + 2 H(+). Its pathway is pyrimidine metabolism; CTP biosynthesis via de novo pathway; CTP from UDP: step 2/2. Its activity is regulated as follows. Allosterically activated by GTP, when glutamine is the substrate; GTP has no effect on the reaction when ammonia is the substrate. The allosteric effector GTP functions by stabilizing the protein conformation that binds the tetrahedral intermediate(s) formed during glutamine hydrolysis. Inhibited by the product CTP, via allosteric rather than competitive inhibition. Functionally, catalyzes the ATP-dependent amination of UTP to CTP with either L-glutamine or ammonia as the source of nitrogen. Regulates intracellular CTP levels through interactions with the four ribonucleotide triphosphates. In Saccharopolyspora erythraea (strain ATCC 11635 / DSM 40517 / JCM 4748 / NBRC 13426 / NCIMB 8594 / NRRL 2338), this protein is CTP synthase.